A 204-amino-acid chain; its full sequence is Guanylate kinase (204 aa).

The Guanylate kinase-like domain maps to 5 to 184 (GLLIVLSGPS…AVQRIKDIIA (180 aa)). 12 to 19 (GPSGVGKG) is a binding site for ATP.

The protein belongs to the guanylate kinase family.

It localises to the cytoplasm. The catalysed reaction is GMP + ATP = GDP + ADP. Functionally, essential for recycling GMP and indirectly, cGMP. This Enterococcus faecalis (strain ATCC 700802 / V583) protein is Guanylate kinase.